We begin with the raw amino-acid sequence, 414 residues long: 3-oxoacyl-[acyl-carrier-protein] synthase 2 (414 aa).

In terms of domain architecture, Ketosynthase family 3 (KS3) spans 4 to 411 (NKRVVITGMG…GHNAVLVFKK (408 aa)). Active-site for beta-ketoacyl synthase activity residues include Cys-165, His-304, and His-341.

It belongs to the thiolase-like superfamily. Beta-ketoacyl-ACP synthases family.

It catalyses the reaction a fatty acyl-[ACP] + malonyl-[ACP] + H(+) = a 3-oxoacyl-[ACP] + holo-[ACP] + CO2. The catalysed reaction is (9Z)-hexadecenoyl-[ACP] + malonyl-[ACP] + H(+) = 3-oxo-(11Z)-octadecenoyl-[ACP] + holo-[ACP] + CO2. It functions in the pathway lipid metabolism; fatty acid biosynthesis. In terms of biological role, involved in the type II fatty acid elongation cycle. Catalyzes the elongation of a wide range of acyl-ACP by the addition of two carbons from malonyl-ACP to an acyl acceptor. Can efficiently catalyze the conversion of palmitoleoyl-ACP (cis-hexadec-9-enoyl-ACP) to cis-vaccenoyl-ACP (cis-octadec-11-enoyl-ACP), an essential step in the thermal regulation of fatty acid composition. This is 3-oxoacyl-[acyl-carrier-protein] synthase 2 (fabF) from Staphylococcus aureus (strain Mu50 / ATCC 700699).